Here is a 479-residue protein sequence, read N- to C-terminus: UDP-N-acetylmuramoyl-L-alanyl-D-glutamate--2,6-diaminopimelate ligase (479 aa).

Serine 21 provides a ligand contact to UDP-N-acetyl-alpha-D-muramoyl-L-alanyl-D-glutamate. 98 to 104 is an ATP binding site; that stretch reads GTNGKSS. UDP-N-acetyl-alpha-D-muramoyl-L-alanyl-D-glutamate is bound by residues 144 to 145, serine 171, glutamine 177, and arginine 179; that span reads TT. Lysine 211 is subject to N6-carboxylysine. Meso-2,6-diaminopimelate-binding positions include arginine 372, 396–399, glycine 446, and glutamate 450; that span reads DNPR. Positions 396–399 match the Meso-diaminopimelate recognition motif motif; sequence DNPR.

The protein belongs to the MurCDEF family. MurE subfamily. The cofactor is Mg(2+). Carboxylation is probably crucial for Mg(2+) binding and, consequently, for the gamma-phosphate positioning of ATP.

It is found in the cytoplasm. It catalyses the reaction UDP-N-acetyl-alpha-D-muramoyl-L-alanyl-D-glutamate + meso-2,6-diaminopimelate + ATP = UDP-N-acetyl-alpha-D-muramoyl-L-alanyl-gamma-D-glutamyl-meso-2,6-diaminopimelate + ADP + phosphate + H(+). The protein operates within cell wall biogenesis; peptidoglycan biosynthesis. Its function is as follows. Catalyzes the addition of meso-diaminopimelic acid to the nucleotide precursor UDP-N-acetylmuramoyl-L-alanyl-D-glutamate (UMAG) in the biosynthesis of bacterial cell-wall peptidoglycan. The sequence is that of UDP-N-acetylmuramoyl-L-alanyl-D-glutamate--2,6-diaminopimelate ligase from Rickettsia conorii (strain ATCC VR-613 / Malish 7).